The following is a 1293-amino-acid chain: Phosphoribosylformylglycinamidine synthase (1293 aa).

ATP-binding positions include 305 to 316 and A676; that span reads GAATGSGGEIRD. Positions 305-327 are disordered; the sequence is GAATGSGGEIRDEGATGRGSKPK. Mg(2+) is bound by residues D677, E716, N720, and D884. S886 provides a ligand contact to ATP. In terms of domain architecture, Glutamine amidotransferase type-1 spans 1040–1293; that stretch reads MAILREQGVN…MFRNARVNLG (254 aa). The active-site Nucleophile is C1133. Active-site residues include H1258 and E1260.

It in the N-terminal section; belongs to the FGAMS family. In terms of assembly, monomer.

It localises to the cytoplasm. It carries out the reaction N(2)-formyl-N(1)-(5-phospho-beta-D-ribosyl)glycinamide + L-glutamine + ATP + H2O = 2-formamido-N(1)-(5-O-phospho-beta-D-ribosyl)acetamidine + L-glutamate + ADP + phosphate + H(+). It participates in purine metabolism; IMP biosynthesis via de novo pathway; 5-amino-1-(5-phospho-D-ribosyl)imidazole from N(2)-formyl-N(1)-(5-phospho-D-ribosyl)glycinamide: step 1/2. Phosphoribosylformylglycinamidine synthase involved in the purines biosynthetic pathway. Catalyzes the ATP-dependent conversion of formylglycinamide ribonucleotide (FGAR) and glutamine to yield formylglycinamidine ribonucleotide (FGAM) and glutamate. The polypeptide is Phosphoribosylformylglycinamidine synthase (Shewanella sp. (strain MR-4)).